The chain runs to 629 residues: 1-deoxy-D-xylulose-5-phosphate synthase (629 aa).

Residues His-72 and 113–115 (GHA) each bind thiamine diphosphate. Position 144 (Asp-144) interacts with Mg(2+). Residues 145–146 (GA), Asn-174, Tyr-287, and Glu-370 each bind thiamine diphosphate. Asn-174 provides a ligand contact to Mg(2+).

It belongs to the transketolase family. DXPS subfamily. Homodimer. It depends on Mg(2+) as a cofactor. Thiamine diphosphate is required as a cofactor.

It carries out the reaction D-glyceraldehyde 3-phosphate + pyruvate + H(+) = 1-deoxy-D-xylulose 5-phosphate + CO2. It participates in metabolic intermediate biosynthesis; 1-deoxy-D-xylulose 5-phosphate biosynthesis; 1-deoxy-D-xylulose 5-phosphate from D-glyceraldehyde 3-phosphate and pyruvate: step 1/1. In terms of biological role, catalyzes the acyloin condensation reaction between C atoms 2 and 3 of pyruvate and glyceraldehyde 3-phosphate to yield 1-deoxy-D-xylulose-5-phosphate (DXP). The chain is 1-deoxy-D-xylulose-5-phosphate synthase from Prochlorococcus marinus (strain MIT 9215).